We begin with the raw amino-acid sequence, 778 residues long: Hyaluronate lyase (778 aa).

Positions 1-33 form a signal peptide, tat-type signal; that stretch reads MSWNRRSFLGALGVTCLAGAGMVPIVRPRTAAA. Catalysis depends on residues asparagine 200, histidine 250, and tyrosine 259.

This sequence belongs to the polysaccharide lyase 8 family. Post-translationally, predicted to be exported by the Tat system. The position of the signal peptide cleavage has not been experimentally proven.

It carries out the reaction [hyaluronan](n) = n 3-(4-deoxy-beta-D-gluc-4-enuronosyl)-N-acetyl-D-glucosamine + H2O. With respect to regulation, is salt-dependent and is active over a wide range of NaCl concentrations. Activity is slightly promoted by Ni(2+), and inhibited by most of the tested metal ions, including Li(+), K(+), Ba(2+), Mg(2+), Zn(2+), Ca(2+), Mn(2+) and Al(3+). Degrades hyaluronic acid into unsaturated disaccharides as the end products. Exhibits very low activity against various types of chondroitin sulfate variants. The protein is Hyaluronate lyase of Thermasporomyces composti.